Consider the following 159-residue polypeptide: Transcriptional repressor NrdR (159 aa).

The segment at 3-34 is a zinc-finger region; sequence CPFCEYNGTRVLDSRPFNHNKSIRRRRECEAC. The ATP-cone domain occupies 49 to 139; that stretch reads LLIVKKDGTR…VYRQFKDINV (91 aa).

This sequence belongs to the NrdR family. Zn(2+) serves as cofactor.

In terms of biological role, negatively regulates transcription of bacterial ribonucleotide reductase nrd genes and operons by binding to NrdR-boxes. The sequence is that of Transcriptional repressor NrdR from Brevibacillus brevis (strain 47 / JCM 6285 / NBRC 100599).